A 466-amino-acid chain; its full sequence is Reticulophagy regulator 3 (466 aa).

A disordered region spans residues 1-28; the sequence is MAEAEGVPTTPGPASGSTFRGRRDVSGS. At A2 the chain carries N-acetylalanine. Topologically, residues 2–80 are cytoplasmic; it reads AEAEGVPTTP…WCLGLNAAFW (79 aa). Phosphothreonine is present on T10. S26 is modified (phosphoserine). A helical membrane pass occupies residues 81–101; the sequence is FFALTSLRLVFLLAFGLMIIV. The Lumenal segment spans residues 102–163; that stretch reads CIDQWKNKIW…FIRNVLLFKK (62 aa). Residues 164-184 form a helical membrane-spanning segment; that stretch reads QNPGKFCLLSCGILTFLAVLG. The Cytoplasmic portion of the chain corresponds to 185 to 186; it reads RY. A helical transmembrane segment spans residues 187 to 207; sequence VPGLLLSYLMLVTVMMWPLAV. At 208–381 the chain is on the lumenal side; the sequence is YHRLWDRAYV…ASRDEAALPE (174 aa). Residues S258 and S260 each carry the phosphoserine modification. T283 carries the post-translational modification Phosphothreonine. A disordered region spans residues 284–374; the sequence is DSEHSDAEVS…EEPQAPPASR (91 aa). Residues S285, S288, S293, and S303 each carry the phosphoserine modification. The span at 294–310 shows a compositional bias: polar residues; the sequence is CTDNGTFNLSRGQTPLT. Residues T307 and T310 each carry the phosphothreonine modification. A phosphoserine mark is found at S313, S320, and S360. Positions 316-331 are enriched in basic and acidic residues; the sequence is LDGHSDPEESFARDLP. A helical transmembrane segment spans residues 382–402; the sequence is LLLGALPVGSNLTSNLASLVS. At 403 to 466 the chain is on the cytoplasmic side; the sequence is QGMIQLALSG…QLDPASSRSH (64 aa). Positions 412 to 466 are disordered; sequence GASQPGPSGAPAQRATRGFLRSPSSDLDTDAEGDDFELLDQSELSQLDPASSRSH. Positions 438–451 are enriched in acidic residues; it reads LDTDAEGDDFELLD. T440 carries the post-translational modification Phosphothreonine. The LIR motif motif lies at 445–450; that stretch reads DDFELL. A compositionally biased stretch (polar residues) spans 453 to 466; it reads SELSQLDPASSRSH.

The protein belongs to the RETREG family. As to quaternary structure, interacts with ATG8 family modifier proteins MAP1LC3A, MAP1LC3B, MAP1LC3C, GABARAP, GABARAPL1 and GABARAPL2. Interacts with CANX. Interacts with RTN4 isoform B.

The protein localises to the endoplasmic reticulum membrane. Its function is as follows. Endoplasmic reticulum (ER)-anchored autophagy regulator which exists in an inactive state under basal conditions but is activated following cellular stress. When activated, induces ER fragmentation and mediates ER delivery into lysosomes through sequestration into autophagosomes via interaction with ATG8 family proteins. Promotes ER membrane curvature and ER tubulation required for subsequent ER fragmentation and engulfment into autophagosomes. Required for collagen quality control in a LIR motif-dependent manner. Mediates NRF1-enhanced neurite outgrowth. The protein is Reticulophagy regulator 3 of Homo sapiens (Human).